The sequence spans 53 residues: uncharacterized protein (53 aa).

It localises to the plastid. Its subcellular location is the chloroplast. This is an uncharacterized protein from Guillardia theta (Cryptophyte).